Here is a 215-residue protein sequence, read N- to C-terminus: Adenylate kinase (215 aa).

10-15 (GAGKGT) is an ATP binding site. Positions 30 to 60 (STGDMLRAAIIKAGTEMGKQAKSVIDAGQLV) are NMP. Residues Thr-31, Arg-36, 58–60 (QLV), 86–89 (GFPR), and Gln-93 each bind AMP. The LID stretch occupies residues 123–160 (GRRAHLPSGRTYHVTFNPSKVEGQDDVTGEPLVIREDD). Residues Arg-124 and 133-134 (TY) each bind ATP. 2 residues coordinate AMP: Arg-157 and Arg-168. ATP is bound at residue Lys-201.

This sequence belongs to the adenylate kinase family. As to quaternary structure, monomer.

It localises to the cytoplasm. The enzyme catalyses AMP + ATP = 2 ADP. The protein operates within purine metabolism; AMP biosynthesis via salvage pathway; AMP from ADP: step 1/1. In terms of biological role, catalyzes the reversible transfer of the terminal phosphate group between ATP and AMP. Plays an important role in cellular energy homeostasis and in adenine nucleotide metabolism. In Aliivibrio salmonicida (strain LFI1238) (Vibrio salmonicida (strain LFI1238)), this protein is Adenylate kinase.